The following is a 110-amino-acid chain: Large ribosomal subunit protein uL22 (110 aa).

This sequence belongs to the universal ribosomal protein uL22 family. In terms of assembly, part of the 50S ribosomal subunit.

Its function is as follows. This protein binds specifically to 23S rRNA; its binding is stimulated by other ribosomal proteins, e.g. L4, L17, and L20. It is important during the early stages of 50S assembly. It makes multiple contacts with different domains of the 23S rRNA in the assembled 50S subunit and ribosome. The globular domain of the protein is located near the polypeptide exit tunnel on the outside of the subunit, while an extended beta-hairpin is found that lines the wall of the exit tunnel in the center of the 70S ribosome. The sequence is that of Large ribosomal subunit protein uL22 from Maridesulfovibrio salexigens (strain ATCC 14822 / DSM 2638 / NCIMB 8403 / VKM B-1763) (Desulfovibrio salexigens).